Consider the following 191-residue polypeptide: Peptidyl-tRNA hydrolase (191 aa).

Tyrosine 15 is a tRNA binding site. The active-site Proton acceptor is the histidine 20. The tRNA site is built by phenylalanine 66, asparagine 68, and asparagine 114.

It belongs to the PTH family. In terms of assembly, monomer.

It localises to the cytoplasm. The catalysed reaction is an N-acyl-L-alpha-aminoacyl-tRNA + H2O = an N-acyl-L-amino acid + a tRNA + H(+). Its function is as follows. Hydrolyzes ribosome-free peptidyl-tRNAs (with 1 or more amino acids incorporated), which drop off the ribosome during protein synthesis, or as a result of ribosome stalling. In terms of biological role, catalyzes the release of premature peptidyl moieties from peptidyl-tRNA molecules trapped in stalled 50S ribosomal subunits, and thus maintains levels of free tRNAs and 50S ribosomes. The sequence is that of Peptidyl-tRNA hydrolase from Streptococcus agalactiae serotype III (strain NEM316).